Here is a 577-residue protein sequence, read N- to C-terminus: Leucine-rich repeat protein soc-2 homolog (577 aa).

2 stretches are compositionally biased toward basic and acidic residues: residues 1 to 10 and 33 to 48; these read MRRTKGRTDS and STAHKSDKKHDPEAKK. The interval 1-71 is disordered; the sequence is MRRTKGRTDS…PTVKKRSTPS (71 aa). 20 LRR repeats span residues 87–109, 110–131, 133–155, 156–177, 179–201, 202–223, 225–246, 248–269, 271–292, 294–315, 318–339, 342–363, 366–387, 389–410, 412–434, 435–456, 458–479, 481–502, 504–526, and 528–549; these read GATRLDLSKAAVTVLPKELKELT, SLRELYLYGNRIAVLPPEVGLL, NLETLALSENNLTTLPDNLVKLT, KLKVLDLRHNKIKEIPDVIYKL, TLTTLYLRFNRISVVESGIGNLK, LLERLSLRENKIKILPRVIGQL, HLVTLDISHNHIENLPAEIGNC, HMTSLDLQHNDIPSLPDSIGRL, AMTRLGLRYNQLSSLPDSLANC, GIDEFNIEGNNIAELPEKLLSS, NLTSLTLSRNKFEVFPAGPPKQ, QVNTFIMEHNRMQKIPFGVFNK, YLSKLNVKDNQLTSLPLDFGSW, SLVELNVATNQISKLPEDIQWL, NLEVLILSNNLLKKLPRGIGALR, KLRVLDIEENKLESIPTEIEYL, SLERLVLQSNCLGSLPRSIGYL, SVTYLSVGENELVSVPQEIGNM, SLEQLYLNDNENLQSLPYELVLC, and SLQIMSIENCPLSALPSQIVAG.

The protein belongs to the SHOC2 family.

Acts as a Ras effector and participates in MAPK pathway activation. Probably acts as a scaffolding protein in a protein phosphatase complex that specifically dephosphorylates Raf kinase and stimulate Raf activity at specialized signaling complexes upon Ras activation. This chain is Leucine-rich repeat protein soc-2 homolog, found in Nematostella vectensis (Starlet sea anemone).